An 829-amino-acid chain; its full sequence is High affinity cAMP-specific and IBMX-insensitive 3',5'-cyclic phosphodiesterase 8A (829 aa).

The segment at 16-46 (EDAPSPAAPPLSSGGPRLPQGQKTAALPRTR) is disordered. A Phosphoserine modification is found at S20. One can recognise a PAS domain in the interval 213–283 (ACNSVFTALE…DTINSCIRIG (71 aa)). One can recognise a PAC domain in the interval 287–329 (QGIYYAKKKNGDNIQQNVKIIPVIGQGGKIRHYVSIIRVCNGN). Residues 341 to 360 (SDTHTDNQTGKHKDRRKGSL) form a disordered region. S359 is modified (phosphoserine; by PKA). S386 and S457 each carry phosphoserine. An involved in RAF1-binding region spans residues 454–461 (RRLSGNEY). The residue at position 461 (Y461) is a Phosphotyrosine. Positions 480–820 (SLDDVPPRIA…KYWKGLDEMK (341 aa)) constitute a PDEase domain. H556 serves as the catalytic Proton donor. H560, H596, D597, and D726 together coordinate a divalent metal cation.

The protein belongs to the cyclic nucleotide phosphodiesterase family. PDE8 subfamily. As to quaternary structure, interacts with RAF1. The interaction promotes RAF1 activity. Requires a divalent metal cation as cofactor. Post-translationally, phosphorylated at Ser-359 by PKA under elevated cAMP conditions, this enhances catalytic activity. In terms of tissue distribution, expressed in most tissues except thymus and peripheral blood leukocytes. Highest levels in testis, ovary, small intestine and colon.

The catalysed reaction is 3',5'-cyclic AMP + H2O = AMP + H(+). It participates in purine metabolism; 3',5'-cyclic AMP degradation; AMP from 3',5'-cyclic AMP: step 1/1. Inhibited by dipyridimole. Insensitive to selective PDE inhibitors including rolipram and zaprinast as well as to the non-selective inhibitor, IBMX. Unaffected by cGMP. Hydrolyzes the second messenger cAMP, which is a key regulator of many important physiological processes. May be involved in maintaining basal levels of the cyclic nucleotide and/or in the cAMP regulation of germ cell development. Binding to RAF1 reduces RAF1 'Ser-259' inhibitory-phosphorylation and stimulates RAF1-dependent EGF-activated ERK-signaling. Protects against cell death induced by hydrogen peroxide and staurosporine. The polypeptide is High affinity cAMP-specific and IBMX-insensitive 3',5'-cyclic phosphodiesterase 8A (PDE8A) (Homo sapiens (Human)).